We begin with the raw amino-acid sequence, 506 residues long: Squalene monooxygenase 1,1 (506 aa).

Helical transmembrane passes span 3–23 (LAFP…WTVF) and 47–67 (DADV…YALA). FAD is bound by residues 57 to 58 (VG), 77 to 78 (ER), Arg85, Phe90, Arg157, Val173, Asp336, and Met349. Residues 447–467 (LIFHLCGITLSSIGQLLSPFP) form a helical membrane-spanning segment.

The protein belongs to the squalene monooxygenase family. FAD is required as a cofactor.

The protein localises to the membrane. The enzyme catalyses squalene + reduced [NADPH--hemoprotein reductase] + O2 = (S)-2,3-epoxysqualene + oxidized [NADPH--hemoprotein reductase] + H2O + H(+). The protein operates within terpene metabolism; lanosterol biosynthesis; lanosterol from farnesyl diphosphate: step 2/3. Catalyzes the stereospecific oxidation of squalene to (S)-2,3-epoxysqualene, and is considered to be a rate-limiting enzyme in steroid biosynthesis. The polypeptide is Squalene monooxygenase 1,1 (SQP1,1) (Brassica napus (Rape)).